The chain runs to 2004 residues: MVKLANPLYTEWILEAIKKVKKQKQRPSEERICNAVSSSHGLDRKTVLEQLELSVKDGTILKVSNKGLNSYKDPDNPGRIALPKPRNHGKLDNKQNVDWNKLIKRAVEGLAESGGSTLKSIERFLKGQKDVSALFGGSAASGFHQQLRLAIKRAIGHGRLLKDGPLYRLNTKATNVDGKESCESLSCLPPVSLLPHEKDKPVAEPIPICSFCLGTKEQNREKKPEELISCADCGNSGHPSCLKFSPELTVRVKALRWQCIECKTCSSCRDQGKNADNMLFCDSCDRGFHMECCDPPLTRMPKGMWICQICRPRKKGRKLLQKKAAQIKRRYTNPIGRPKNRLKKQNTVSKGPFSKVRTGPGRGRKRKITLSSQSASSSSEEGYLERIDGLDFCRDSNVSLKFNKKTKGLIDGLTKFFTPSPDGRKARGEVVDYSEQYRIRKRGNRKSSTSDWPTDNQDGWDGKQENEERLFGSQEIMTEKDMELFRDIQEQALQKVGVTGPPDPQVRCPSVIEFGKYEIHTWYSSPYPQEYSRLPKLYLCEFCLKYMKSRTILQQHMKKCGWFHPPANEIYRKNNISVFEVDGNVSTIYCQNLCLLAKLFLDHKTLYYDVEPFLFYVLTQNDVKGCHLVGYFSKEKHCQQKYNVSCIMILPQYQRKGYGRFLIDFSYLLSKREGQAGSPEKPLSDLGRLSYMAYWKSVILECLYHQNDKQISIKKLSKLTGICPQDITSTLHHLRMLDFRSDQFVIIRREKLIQDHMAKLQLNLRPVDVDPECLRWTPVIVSNSVVSEEEEEEAEEGENEEPQCQERELEISVGKSVSHENKEQDSYSVESEKKPEVMAPVSSTRLSKQVLPHDSLPANSQPSRRGRWGRKNRKTQERFGDKDSKLLLEETSSAPQEQYGECGEKSEATQEQYTESEEQLVASEEQPSQDGKPDLPKRRLSEGVEPWRGQLKKSPEALKCRLTEGSERLPRRYSEGDRAVLRGFSESSEEEEEPESPRSSSPPILTKPTLKRKKPFLHRRRRVRKRKHHNSSVVTETISETTEVLDEPFEDSDSERPMPRLEPTFEIDEEEEEEDENELFPREYFRRLSSQDVLRCQSSSKRKSKDEEEDEESDDADDTPILKPVSLLRKRDVKNSPLEPDTSTPLKKKKGWPKGKSRKPIHWKKRPGRKPGFKLSREIMPVSTQACVIEPIVSIPKAGRKPKIQESEETVEPKEDMPLPEERKEEEEMQAEAEEAEEGEEEDAASSEVPAASPADSSNSPETETKEPEVEEEEEKPRVSEEQRQSEEEQQELEEPEPEEEEDAAAETAQNDDHDADDEDDGHLESTKKKELEEQPTREDVKEEPGVQESFLDANMQKSREKIKDKEETELDSEEEQPSHDTSVVSEQMAGSEDDHEEDSHTKEELIELKEEEEIPHSELDLETVQAVQSLTQEESSEHEGAYQDCEETLAACQTLQSYTQADEDPQMSMVEDCHASEHNSPISSVQSHPSQSVRSVSSPNVPALESGYTQISPEQGSLSAPSMQNMETSPMMDVPSVSDHSQQVVDSGFSDLGSIESTTENYENPSSYDSTMGGSICGNSSSQSSCSYGGLSSSSSLTQSSCVVTQQMASMGSSCSMMQQSSVQPAANCSIKSPQSCVVERPPSNQQQQPPPPPPQQPQPPPPQPQPAPQPPPPQQQPQQQPQPQPQQPPPPPPPQQQPPLSQCSMNNSFTPAPMIMEIPESGSTGNISIYERIPGDFGAGSYSQPSATFSLAKLQQLTNTIMDPHAMPYSHSPAVTSYATSVSLSNTGLAQLAPSHPLAGTPQAQATMTPPPNLASTTMNLTSPLLQCNMSATNIGIPHTQRLQGQMPVKGHISIRSKSAPLPSAAAHQQQLYGRSPSAVAMQAGPRALAVQRGMNMGVNLMPTPAYNVNSMNMNTLNAMNSYRMTQPMMNSSYHSNPAYMNQTAQYPMQMQMGMMGSQAYTQQPMQPNPHGNMMYTGPSHHSYMNAAGVPKQSLNGPYMRR.

Residues 1 to 77 (MVKLANPLYT…LNSYKDPDNP (77 aa)) enclose the SAMD1-like winged helix (WH) domain. The segment at 1 to 144 (MVKLANPLYT…FGGSAASGFH (144 aa)) is required for activation of RUNX1-1. The required for nuclear localization stretch occupies residues 52 to 166 (ELSVKDGTIL…HGRLLKDGPL (115 aa)). One can recognise an H15 domain in the interval 95–171 (QNVDWNKLIK…KDGPLYRLNT (77 aa)). Residues 144-664 (HQQLRLAIKR…RKGYGRFLID (521 aa)) are interaction with PML. K172 is modified (N6-acetyllysine). 2 PHD-type zinc fingers span residues 206–265 (IPIC…CKTC) and 259–313 (CIEC…CRPR). Residues 312–664 (PRKKGRKLLQ…RKGYGRFLID (353 aa)) are interaction with RUNX1-1. The tract at residues 334-375 (PIGRPKNRLKKQNTVSKGPFSKVRTGPGRGRKRKITLSSQSA) is disordered. N6-acetyllysine is present on residues K350 and K355. Phosphothreonine; by PKB/AKT1 is present on T369. A Phosphoserine modification is found at S420. A disordered region spans residues 441 to 464 (KRGNRKSSTSDWPTDNQDGWDGKQ). A compositionally biased stretch (polar residues) spans 446–457 (KSSTSDWPTDNQ). S473 is subject to Phosphoserine. The tract at residues 488–778 (IQEQALQKVG…VDPECLRWTP (291 aa)) is catalytic. The region spanning 504–778 (PQVRCPSVIE…VDPECLRWTP (275 aa)) is the MYST-type HAT domain. Residues 507–810 (RCPSVIEFGK…EPQCQERELE (304 aa)) are mediates interaction with BRPF1, required for histone H3 acetyltransferase activity. The C2HC MYST-type zinc finger occupies 537–562 (LYLCEFCLKYMKSRTILQQHMKKCGW). K604 carries the post-translational modification N6-acetyllysine; by autocatalysis. Acetyl-CoA is bound by residues 645–649 (SCIMI) and 654–660 (QRKGYGR). E680 (proton donor/acceptor) is an active-site residue. Residue S684 participates in acetyl-CoA binding. 3 disordered regions span residues 785–1445 (VVSE…AYQD), 1461–1621 (QADE…MMQQ), and 1637–1721 (SCVV…MEIP). 2 positions are modified to phosphoserine: S787 and S812. Residues 787-803 (SEEEEEEAEEGENEEPQ) are compositionally biased toward acidic residues. Residue K815 is modified to N6-acetyllysine. Residues 817–836 (VSHENKEQDSYSVESEKKPE) show a composition bias toward basic and acidic residues. K834 participates in a covalent cross-link: Glycyl lysine isopeptide (Lys-Gly) (interchain with G-Cter in SUMO2). The span at 864-873 (RRGRWGRKNR) shows a compositional bias: basic residues. A compositionally biased stretch (basic and acidic residues) spans 874–888 (KTQERFGDKDSKLLL). Residue Y899 is modified to Phosphotyrosine. Basic and acidic residues-rich tracts occupy residues 931 to 942 (GKPDLPKRRLSE) and 953 to 980 (KSPE…DRAV). Residues S941, S954, and S974 each carry the phosphoserine modification. K1007 is subject to N6-acetyllysine. The span at 1009–1030 (TLKRKKPFLHRRRRVRKRKHHN) shows a compositional bias: basic residues. Positions 1031–1042 (SSVVTETISETT) are enriched in low complexity. Acidic residues-rich tracts occupy residues 1043 to 1053 (EVLDEPFEDSD) and 1065 to 1078 (FEID…DENE). Phosphoserine occurs at positions 1089, 1090, and 1113. The span at 1107-1118 (EEEDEESDDADD) shows a compositional bias: acidic residues. The segment covering 1146–1172 (LKKKKGWPKGKSRKPIHWKKRPGRKPG) has biased composition (basic residues). The segment covering 1203–1223 (KIQESEETVEPKEDMPLPEER) has biased composition (basic and acidic residues). Residues 1224–1245 (KEEEEMQAEAEEAEEGEEEDAA) show a composition bias toward acidic residues. Positions 1246–1262 (SSEVPAASPADSSNSPE) are enriched in low complexity. Residues 1275–1287 (EKPRVSEEQRQSE) show a composition bias toward basic and acidic residues. Residues 1288-1305 (EEQQELEEPEPEEEEDAA) are compositionally biased toward acidic residues. Composition is skewed to basic and acidic residues over residues 1323–1345 (HLES…KEEP), 1358–1367 (KSREKIKDKE), and 1398–1420 (EDSH…HSEL). K1342 participates in a covalent cross-link: Glycyl lysine isopeptide (Lys-Gly) (interchain with G-Cter in SUMO2). The segment covering 1481–1503 (SPISSVQSHPSQSVRSVSSPNVP) has biased composition (low complexity). Residues 1508 to 1529 (GYTQISPEQGSLSAPSMQNMET) show a composition bias toward polar residues. An interaction with RUNX1-2 region spans residues 1517 to 1642 (GSLSAPSMQN…KSPQSCVVER (126 aa)). The tract at residues 1517–1741 (GSLSAPSMQN…YERIPGDFGA (225 aa)) is interaction with PML. Positions 1534–1548 (DVPSVSDHSQQVVDS) are enriched in low complexity. Polar residues predominate over residues 1556-1573 (IESTTENYENPSSYDSTM). The segment covering 1574–1621 (GGSICGNSSSQSSCSYGGLSSSSSLTQSSCVVTQQMASMGSSCSMMQQ) has biased composition (low complexity). Pro residues predominate over residues 1650 to 1699 (QPPPPPPQQPQPPPPQPQPAPQPPPPQQQPQQQPQPQPQQPPPPPPPQQQ). Residues 1702–1712 (LSQCSMNNSFT) show a composition bias toward polar residues. Residues 1913 to 1948 (SMNMNTLNAMNSYRMTQPMMNSSYHSNPAYMNQTAQ) form a required for activation of RUNX1-2 region.

The protein belongs to the MYST (SAS/MOZ) family. In terms of assembly, component of the MOZ/MORF complex composed at least of ING5, KAT6A, KAT6B, MEAF6 and one of BRPF1, BRD1/BRPF2 and BRPF3. Interacts with RUNX1; phosphorylation of RUNX1 enhances the interaction. Interacts with RUNX2. Interacts with p53/TP53. Interacts with PML (isoform PML-4) and this interaction positively regulates its acetylation activity towards p53/TP53. Post-translationally, autoacetylation at Lys-604 is required for proper function. Autoacetylated. In terms of processing, phosphorylation at Thr-369 by PKB/AKT1 inhibits its interaction with PML and negatively regulates its acetylation activity towards p53/TP53.

It localises to the nucleus. Its subcellular location is the nucleolus. The protein resides in the nucleoplasm. It is found in the PML body. The enzyme catalyses L-lysyl-[protein] + acetyl-CoA = N(6)-acetyl-L-lysyl-[protein] + CoA + H(+). Histone acetyltransferase that acetylates lysine residues in histone H3 and histone H4 (in vitro). Component of the MOZ/MORF complex which has a histone H3 acetyltransferase activity. May act as a transcriptional coactivator for RUNX1 and RUNX2. Acetylates p53/TP53 at 'Lys-120' and 'Lys-382' and controls its transcriptional activity via association with PML. This chain is Histone acetyltransferase KAT6A (KAT6A), found in Homo sapiens (Human).